We begin with the raw amino-acid sequence, 89 residues long: Small ribosomal subunit protein uS15 (89 aa).

Belongs to the universal ribosomal protein uS15 family. As to quaternary structure, part of the 30S ribosomal subunit. Forms a bridge to the 50S subunit in the 70S ribosome, contacting the 23S rRNA.

One of the primary rRNA binding proteins, it binds directly to 16S rRNA where it helps nucleate assembly of the platform of the 30S subunit by binding and bridging several RNA helices of the 16S rRNA. Its function is as follows. Forms an intersubunit bridge (bridge B4) with the 23S rRNA of the 50S subunit in the ribosome. The sequence is that of Small ribosomal subunit protein uS15 from Enterobacter sp. (strain 638).